We begin with the raw amino-acid sequence, 386 residues long: Succinyl-diaminopimelate desuccinylase (386 aa).

Residue histidine 72 coordinates Zn(2+). Residue aspartate 74 is part of the active site. Aspartate 105 lines the Zn(2+) pocket. The active-site Proton acceptor is the glutamate 139. 3 residues coordinate Zn(2+): glutamate 140, glutamate 168, and histidine 353.

The protein belongs to the peptidase M20A family. DapE subfamily. Homodimer. Requires Zn(2+) as cofactor. The cofactor is Co(2+).

It catalyses the reaction N-succinyl-(2S,6S)-2,6-diaminopimelate + H2O = (2S,6S)-2,6-diaminopimelate + succinate. Its pathway is amino-acid biosynthesis; L-lysine biosynthesis via DAP pathway; LL-2,6-diaminopimelate from (S)-tetrahydrodipicolinate (succinylase route): step 3/3. In terms of biological role, catalyzes the hydrolysis of N-succinyl-L,L-diaminopimelic acid (SDAP), forming succinate and LL-2,6-diaminopimelate (DAP), an intermediate involved in the bacterial biosynthesis of lysine and meso-diaminopimelic acid, an essential component of bacterial cell walls. The chain is Succinyl-diaminopimelate desuccinylase from Rhodospirillum centenum (strain ATCC 51521 / SW).